A 77-amino-acid chain; its full sequence is Putative snRNP Sm-like protein (77 aa).

One can recognise a Sm domain in the interval 4-76 (RPLDVLNRSL…VVFVSPAPGG (73 aa)).

This sequence belongs to the snRNP Sm proteins family.

The sequence is that of Putative snRNP Sm-like protein from Archaeoglobus fulgidus (strain ATCC 49558 / DSM 4304 / JCM 9628 / NBRC 100126 / VC-16).